A 339-amino-acid polypeptide reads, in one-letter code: DNA-directed RNA polymerase subunit alpha (339 aa).

The tract at residues 1-233 (MVREEVAGST…DLFLPFLHAE (233 aa)) is alpha N-terminal domain (alpha-NTD). Positions 264 to 339 (KKGIPLNCIF…IDLLKNKLSF (76 aa)) are alpha C-terminal domain (alpha-CTD).

Belongs to the RNA polymerase alpha chain family. In terms of assembly, in plastids the minimal PEP RNA polymerase catalytic core is composed of four subunits: alpha, beta, beta', and beta''. When a (nuclear-encoded) sigma factor is associated with the core the holoenzyme is formed, which can initiate transcription.

The protein localises to the plastid. The protein resides in the chloroplast. It catalyses the reaction RNA(n) + a ribonucleoside 5'-triphosphate = RNA(n+1) + diphosphate. Its function is as follows. DNA-dependent RNA polymerase catalyzes the transcription of DNA into RNA using the four ribonucleoside triphosphates as substrates. The polypeptide is DNA-directed RNA polymerase subunit alpha (Thinopyrum elongatum (Tall wheatgrass)).